The following is a 108-amino-acid chain: PTS system fructose-like EIIB component 1 (108 aa).

The region spanning 1–101 is the PTS EIIB type-2 domain; that stretch reads MSKKLIALCA…AAGIIKEIEE (101 aa). The Phosphocysteine intermediate role is filled by Cys-11. Position 11 is a phosphocysteine; by EIIA (Cys-11).

The protein resides in the cytoplasm. It carries out the reaction D-fructose(out) + N(pros)-phospho-L-histidyl-[protein] = D-fructose 1-phosphate(in) + L-histidyl-[protein]. Functionally, the phosphoenolpyruvate-dependent sugar phosphotransferase system (sugar PTS), a major carbohydrate active transport system, catalyzes the phosphorylation of incoming sugar substrates concomitantly with their translocation across the cell membrane. The enzyme II FryABC PTS system is involved in fructose transport. The polypeptide is PTS system fructose-like EIIB component 1 (fryB) (Shigella flexneri).